A 427-amino-acid polypeptide reads, in one-letter code: Acyl-lipid 8-desaturase (427 aa).

The tract at residues 1 to 24 (MGRGGDSSGQAHPAAELAVPSDRA) is disordered. The Cytochrome b5 heme-binding domain maps to 36-84 (IVLYGKRVDVTKFQRTHPGGSKVFRIFQDRDATEQFESYHSKRAIKMME). Heme is bound by residues histidine 52 and histidine 75. The short motif at 178–182 (HSVFK) is the Histidine box-1 element. Residues 189–209 (VGWNNAAGYFLGFVQGYAVEW) form a helical membrane-spanning segment. The Histidine box-2 signature appears at 213–218 (RHNTHH). The next 2 helical transmembrane spans lie at 261–281 (VPVM…YVAM) and 286–306 (MLPQ…VFAG). The short motif at 373–377 (QTEHH) is the Histidine box-3 element.

The protein belongs to the fatty acid desaturase type 1 family. Requires Fe(2+) as cofactor.

It is found in the membrane. Functionally, fatty acid desaturase that introduces a cis double bond at the 8-position in 20-carbon polyunsaturated fatty acids incorporated in a glycerolipid that contain a Delta(8) double bond to yield (20:4(8,11,14,17)). This Rebecca salina (Marine microalga) protein is Acyl-lipid 8-desaturase.